Consider the following 233-residue polypeptide: MSACQTPIIVALDFPTRDAALKLADQLDPKLCRVKVGKELFTSCAAEIVGTLRDKGFEVFLDLKFHDIPNTTAMAVKAAAEMGVWMVNVHCSGGLRMMAACREVLDQRSGPKPLLIGVTVLTSMEREDLAGIGLDIEPQEQVLRLAALAQKAGMDGLVCSALEAQALKSAHPSLQLVTPGIRPAGSAQDDQRRILTPRQALDAGSDYLVIGRPISQAADPAKALADVVAELAL.

Residues aspartate 13, lysine 35, 62 to 71, threonine 122, arginine 182, glutamine 191, glycine 211, and arginine 212 each bind substrate; that span reads DLKFHDIPNT. Catalysis depends on lysine 64, which acts as the Proton donor.

Belongs to the OMP decarboxylase family. Type 1 subfamily. In terms of assembly, homodimer.

It catalyses the reaction orotidine 5'-phosphate + H(+) = UMP + CO2. The protein operates within pyrimidine metabolism; UMP biosynthesis via de novo pathway; UMP from orotate: step 2/2. Functionally, catalyzes the decarboxylation of orotidine 5'-monophosphate (OMP) to uridine 5'-monophosphate (UMP). The sequence is that of Orotidine 5'-phosphate decarboxylase from Pseudomonas fluorescens (strain ATCC BAA-477 / NRRL B-23932 / Pf-5).